The sequence spans 258 residues: Synaptosomal-associated protein 29 (258 aa).

The tract at residues 1–43 is disordered; sequence MSAYPRSYNPFDEDAEDEDARPAPWSDSRDLADGPGAPADRQQ. A phosphoserine mark is found at S65, S77, and S114. The stretch at 76 to 107 forms a coiled coil; it reads VSAEELVRQRGALERTEKMVDKMEQDLKTSQK. 2 disordered regions span residues 127–147 and 161–188; these read PAET…GRLK and QASH…SSEA. 2 positions are modified to phosphothreonine: T130 and T137. Over residues 131–142 the composition is skewed to polar residues; sequence PSAQNGTLTPQP. S163, S182, S185, S204, and S210 each carry phosphoserine. The t-SNARE coiled-coil homology domain occupies 196-258; the sequence is RACHQRIDSN…TSTERKVRQL (63 aa).

It belongs to the SNAP-25 family. As to quaternary structure, forms a SNARE complex, composed of VAMP8, SNAP29 and STX17, involved in fusion of autophagosome with lysosome. Interacts with multiple syntaxins including STX6. Interacts with EIPR1. Interacts with STX17; this interaction is increased in the absence of TMEM39A.

The protein localises to the cytoplasm. Its subcellular location is the golgi apparatus membrane. It localises to the cytoplasmic vesicle. It is found in the autophagosome membrane. The protein resides in the cell projection. The protein localises to the cilium membrane. Functionally, SNAREs, soluble N-ethylmaleimide-sensitive factor-attachment protein receptors, are essential proteins for fusion of cellular membranes. SNAREs localized on opposing membranes assemble to form a trans-SNARE complex, an extended, parallel four alpha-helical bundle that drives membrane fusion. SNAP29 is a SNARE involved in autophagy through the direct control of autophagosome membrane fusion with the lysososome membrane. Also plays a role in ciliogenesis by regulating membrane fusions. The chain is Synaptosomal-associated protein 29 from Bos taurus (Bovine).